A 314-amino-acid polypeptide reads, in one-letter code: ATP synthase gamma chain (314 aa).

The protein belongs to the ATPase gamma chain family. F-type ATPases have 2 components, CF(1) - the catalytic core - and CF(0) - the membrane proton channel. CF(1) has five subunits: alpha(3), beta(3), gamma(1), delta(1), epsilon(1). CF(0) has three main subunits: a, b and c.

Its subcellular location is the cell membrane. Produces ATP from ADP in the presence of a proton gradient across the membrane. The gamma chain is believed to be important in regulating ATPase activity and the flow of protons through the CF(0) complex. This Cutibacterium acnes (strain DSM 16379 / KPA171202) (Propionibacterium acnes) protein is ATP synthase gamma chain.